The chain runs to 198 residues: Chorion protein S19 (198 aa).

A signal peptide spans 1–16; the sequence is MNKFATLAVFISVCLA.

It belongs to the chorion protein S19 family.

It is found in the secreted. Chorion membrane (egg shell) protein; plays a role in protecting the egg from the environment. The sequence is that of Chorion protein S19 (Cp19) from Drosophila virilis (Fruit fly).